Reading from the N-terminus, the 94-residue chain is Co-chaperonin GroES (94 aa).

Belongs to the GroES chaperonin family. Heptamer of 7 subunits arranged in a ring. Interacts with the chaperonin GroEL.

The protein localises to the cytoplasm. Functionally, together with the chaperonin GroEL, plays an essential role in assisting protein folding. The GroEL-GroES system forms a nano-cage that allows encapsulation of the non-native substrate proteins and provides a physical environment optimized to promote and accelerate protein folding. GroES binds to the apical surface of the GroEL ring, thereby capping the opening of the GroEL channel. The polypeptide is Co-chaperonin GroES (Clostridium botulinum (strain Eklund 17B / Type B)).